An 847-amino-acid polypeptide reads, in one-letter code: B-cell receptor CD22 (847 aa).

The N-terminal stretch at methionine 1–serine 19 is a signal peptide. The Ig-like V-type domain maps to aspartate 20 to glutamate 138. Topologically, residues aspartate 20–arginine 687 are extracellular. 3 N-linked (GlcNAc...) asparagine glycosylation sites follow: asparagine 67, asparagine 101, and asparagine 112. N-acetylneuraminate is bound at residue arginine 120. N-linked (GlcNAc...) asparagine glycosylation is found at asparagine 135, asparagine 164, and asparagine 231. Ig-like C2-type domains lie at proline 143 to glutamine 235, proline 242 to glutamine 326, proline 331 to glutamine 416, proline 419 to asparagine 500, proline 505 to serine 582, and proline 593 to threonine 676. Cysteine 161 and cysteine 219 are joined by a disulfide. Intrachain disulfides connect cysteine 265/cysteine 309 and cysteine 353/cysteine 396. N-linked (GlcNAc...) asparagine glycans are attached at residues asparagine 363, asparagine 428, asparagine 445, asparagine 448, and asparagine 479. Intrachain disulfides connect cysteine 442–cysteine 484 and cysteine 529–cysteine 571. N-linked (GlcNAc...) asparagine glycans are attached at residues asparagine 574 and asparagine 634. Cysteine 616 and cysteine 659 are disulfide-bonded. The chain crosses the membrane as a helical span at residues valine 688–leucine 708. Residues glutamine 709–histidine 847 are Cytoplasmic-facing. Phosphoserine is present on residues serine 725, serine 726, and serine 729. Short sequence motifs (ITIM motif) lie at residues isoleucine 760–leucine 765 and valine 794–leucine 799. Tyrosine 762 carries the phosphotyrosine modification. A phosphotyrosine mark is found at tyrosine 807, tyrosine 822, and tyrosine 842. Short sequence motifs (ITIM motif) lie at residues isoleucine 820–leucine 825 and valine 840–leucine 845.

Belongs to the immunoglobulin superfamily. SIGLEC (sialic acid binding Ig-like lectin) family. Predominantly monomer of isoform CD22-beta. Also found as heterodimer of isoform CD22-beta and a shorter isoform. Interacts with PTPN6/SHP-1, LYN, SYK, PIK3R1/PIK3R2 and PLCG1 upon phosphorylation. Interacts with GRB2, INPP5D and SHC1 upon phosphorylation. May form a complex with INPP5D/SHIP, GRB2 and SHC1. Phosphorylation of Tyr-762, Tyr-807 and Tyr-822 are involved in binding to SYK, GRB2 and SYK, respectively. Phosphorylation of Tyr-842 is involved in binding to SYK, PLCG2 and PIK3R1/PIK3R2. In terms of processing, phosphorylated on tyrosine residues by LYN.

It localises to the cell membrane. In terms of biological role, most highly expressed siglec (sialic acid-binding immunoglobulin-like lectin) on B-cells that plays a role in various aspects of B-cell biology including differentiation, antigen presentation, and trafficking to bone marrow. Binds to alpha 2,6-linked sialic acid residues of surface molecules such as CD22 itself, CD45 and IgM in a cis configuration. Can also bind to ligands on other cells as an adhesion molecule in a trans configuration. Acts as an inhibitory coreceptor on the surface of B-cells and inhibits B-cell receptor induced signaling, characterized by inhibition of the calcium mobilization and cellular activation. Mechanistically, the immunoreceptor tyrosine-based inhibitory motif domain is phosphorylated by the Src kinase LYN, which in turn leads to the recruitment of the protein tyrosine phosphatase 1/PTPN6, leading to the negative regulation of BCR signaling. If this negative signaling from is of sufficient strength, apoptosis of the B-cell can be induced. This Pan troglodytes (Chimpanzee) protein is B-cell receptor CD22.